Consider the following 357-residue polypeptide: Alanine racemase (357 aa).

Lys33 serves as the catalytic Proton acceptor; specific for D-alanine. At Lys33 the chain carries N6-(pyridoxal phosphate)lysine. Residue Arg130 coordinates substrate. Catalysis depends on Tyr252, which acts as the Proton acceptor; specific for L-alanine. Met300 is a binding site for substrate.

The protein belongs to the alanine racemase family. Pyridoxal 5'-phosphate serves as cofactor.

It carries out the reaction L-alanine = D-alanine. The protein operates within amino-acid biosynthesis; D-alanine biosynthesis; D-alanine from L-alanine: step 1/1. Its function is as follows. Catalyzes the interconversion of L-alanine and D-alanine. May also act on other amino acids. The polypeptide is Alanine racemase (alr) (Acidiphilium cryptum (strain JF-5)).